Reading from the N-terminus, the 356-residue chain is Tyrosine recombinase XerS (356 aa).

The region spanning 16–121 (LMPWYVLEYY…ALSSLYKYLT (106 aa)) is the Core-binding (CB) domain. Residues 169–354 (GFLTYIDQEH…VSDEQKNALD (186 aa)) form the Tyr recombinase domain. Residues Arg-210, Lys-234, His-306, Arg-309, and His-332 contribute to the active site. Tyr-341 serves as the catalytic O-(3'-phospho-DNA)-tyrosine intermediate.

Belongs to the 'phage' integrase family. XerS subfamily.

It localises to the cytoplasm. FtsK is required for recombination. Site-specific tyrosine recombinase, which acts by catalyzing the cutting and rejoining of the recombining DNA molecules. Essential to convert dimers of the bacterial chromosome into monomers to permit their segregation at cell division. The sequence is that of Tyrosine recombinase XerS from Streptococcus pneumoniae serotype 4 (strain ATCC BAA-334 / TIGR4).